Consider the following 531-residue polypeptide: Flavin-containing monooxygenase 3 (531 aa).

FAD contacts are provided by residues 9–13, glutamate 32, 40–41, and 61–62; these read GAGIS, LW, and NS. NADP(+) contacts are provided by residues 60–61 and 195–198; these read TN and SGCD. Residues 511 to 531 traverse the membrane as a helical segment; it reads FSPWLKLLAIAVLLIAAVLVF.

It belongs to the FMO family. It depends on FAD as a cofactor. As to expression, liver.

It is found in the microsome membrane. It localises to the endoplasmic reticulum membrane. It carries out the reaction trimethylamine + NADPH + O2 = trimethylamine N-oxide + NADP(+) + H2O. It catalyses the reaction N,N-dimethylaniline + NADPH + O2 + H(+) = N,N-dimethylaniline N-oxide + NADP(+) + H2O. The enzyme catalyses hypotaurine + NADPH + O2 + H(+) = taurine + NADP(+) + H2O. The catalysed reaction is (S)-nicotine + NADPH + O2 = trans-(S)-nicotine N(1')-oxide + NADP(+) + H2O. It carries out the reaction albendazole + NADPH + O2 + H(+) = albendazole S-oxide + NADP(+) + H2O. Its function is as follows. Essential hepatic enzyme that catalyzes the oxygenation of a wide variety of nitrogen- and sulfur-containing compounds including drugs as well as dietary compounds. Plays an important role in the metabolism of trimethylamine (TMA), via the production of trimethylamine N-oxide (TMAO) metabolite. TMA is generated by the action of gut microbiota using dietary precursors such as choline, choline containing compounds, betaine or L-carnitine. By regulating TMAO concentration, FMO3 directly impacts both platelet responsiveness and rate of thrombus formation. The sequence is that of Flavin-containing monooxygenase 3 (FMO3) from Oryctolagus cuniculus (Rabbit).